The following is a 96-amino-acid chain: Large ribosomal subunit protein eL14 (96 aa).

The protein belongs to the eukaryotic ribosomal protein eL14 family.

The sequence is that of Large ribosomal subunit protein eL14 from Sulfolobus acidocaldarius (strain ATCC 33909 / DSM 639 / JCM 8929 / NBRC 15157 / NCIMB 11770).